A 374-amino-acid polypeptide reads, in one-letter code: WW domain-binding protein 4 (374 aa).

The segment at 11 to 42 adopts a Matrin-type zinc-finger fold; the sequence is KFCDYCKCWIADNRPSVEFHERGKNHKENVAR. Residues 91-109 show a composition bias toward polar residues; that stretch reads EPTISPVTNTVQPTPTANQ. Disordered stretches follow at residues 91–126 and 188–328; these read EPTISPVTNTVQPTPTANQQKEKKKKKKKKEASKGR and SKWE…EAGA. Over residues 112–121 the composition is skewed to basic residues; the sequence is EKKKKKKKKE. WW domains lie at 121-154 and 162-195; these read EASKGRWVEGVTADGHCYYYDLVTGASQWEKPEG and TAAKAIWVEGLSEDGYTYYYNTETGESKWEKPDD. Composition is skewed to basic and acidic residues over residues 188-197 and 205-270; these read SKWEKPDDFI and SSKD…EKTT. Ser-219, Ser-226, and Ser-228 each carry phosphoserine. Positions 315-325 are enriched in polar residues; the sequence is STENECLSSSE. The interaction with SNRNP200 stretch occupies residues 355–373; it reads KKRRIENGKSRNLRQRGED.

In terms of assembly, component of the spliceosome B complex. Associated with U2 snRNPs. Binds splicing factors SNRPB, SNRPC and SF1. Interacts via the WW domains with the Pro-rich domains of KHDRBS1/SAM68. Interacts via the WW domains with the Pro-rich domains of WBP11. Interacts with SNRNP200.

Its subcellular location is the nucleus. The protein localises to the nucleus speckle. In terms of biological role, involved in pre-mRNA splicing as a component of the spliceosome. May play a role in cross-intron bridging of U1 and U2 snRNPs in the mammalian A complex. The chain is WW domain-binding protein 4 (Wbp4) from Rattus norvegicus (Rat).